Consider the following 300-residue polypeptide: Acetylglutamate kinase (300 aa).

Residues 68–69, Arg90, and Asn195 contribute to the substrate site; that span reads GG.

It belongs to the acetylglutamate kinase family. ArgB subfamily.

The protein localises to the cytoplasm. It carries out the reaction N-acetyl-L-glutamate + ATP = N-acetyl-L-glutamyl 5-phosphate + ADP. Its pathway is amino-acid biosynthesis; L-arginine biosynthesis; N(2)-acetyl-L-ornithine from L-glutamate: step 2/4. Catalyzes the ATP-dependent phosphorylation of N-acetyl-L-glutamate. This chain is Acetylglutamate kinase, found in Halorhodospira halophila (strain DSM 244 / SL1) (Ectothiorhodospira halophila (strain DSM 244 / SL1)).